The sequence spans 122 residues: Large ribosomal subunit protein uL14 (122 aa).

Belongs to the universal ribosomal protein uL14 family. As to quaternary structure, part of the 50S ribosomal subunit. Forms a cluster with proteins L3 and L19. In the 70S ribosome, L14 and L19 interact and together make contacts with the 16S rRNA in bridges B5 and B8.

In terms of biological role, binds to 23S rRNA. Forms part of two intersubunit bridges in the 70S ribosome. This is Large ribosomal subunit protein uL14 from Geobacillus kaustophilus (strain HTA426).